An 898-amino-acid polypeptide reads, in one-letter code: Zinc finger protein 574 (898 aa).

3 consecutive C2H2-type zinc fingers follow at residues 16-38 (YVCSECNQLYGSLEEVLVHQNSH), 76-98 (YQCLECGQLLLSPSQLLEHQELH), and 126-148 (YECVDCKALFASQEMWLSHRQTH). S164 is modified (phosphoserine). The C2H2-type 4 zinc-finger motif lies at 213–235 (YKCSECSQLFQMPADFLEHQATH). A disordered region spans residues 243–305 (AEEPATQQET…PRRSSSGESG (63 aa)). The span at 273–290 (HSYELRNELRNGEAMGRD) shows a compositional bias: basic and acidic residues. S301 carries the post-translational modification Phosphoserine. 4 consecutive C2H2-type zinc fingers follow at residues 310-332 (LFCSACDQIFLSPHQLQQHLRSH), 337-359 (FKCPLCSRVFPSPSSLDQHLGDH), 365-387 (FLCVDCGLAFGTEALLLAHRRAH), and 393-414 (HSCPCGKTFVNLTKFLYHRRTH). The disordered stretch occupies residues 417–460 (GGVPLPTTPVPPEEPAISFPEPAPAETGELEAPELPVSEESSAE). C2H2-type zinc fingers lie at residues 467–490 (YRCLLCSREFSKALQLTRHQRFVH), 496–518 (HKCSICGKMFKKKSHVRNHLRTH), 524–546 (FPCPDCSKPFNSPANLARHRLTH), 552–574 (YRCGDCGKAFTQSSTLRQHRLVH), 580–602 (YRCQECGVRFHRPYRLLMHRYHH), and 608–631 (YKCRECPRSFLLRRLLEVHQLVVH). The segment at 637 to 660 (HRCPSCGAAFPSSLRLREHRCAAA) adopts a C2H2-type 15; degenerate zinc-finger fold. The C2H2-type 16 zinc-finger motif lies at 668-690 (FECGTCGKKVGSAARLQAHEAAH). The interval 691-735 (AAAGPGEVLAKEPPAPRAARATRTPVAPSPTALGGTTSAAPAAPA) is disordered. The segment covering 707 to 734 (RAARATRTPVAPSPTALGGTTSAAPAAP) has biased composition (low complexity). Residue S719 is modified to Phosphoserine. A Phosphothreonine modification is found at T726. C2H2-type zinc fingers lie at residues 740 to 762 (LECSECKKLFSTETSLQVHRRIH), 768 to 790 (YPCPDCGKAFRQSTHLKDHRRLH), 796 to 818 (FACEVCGKAFAISMRLAEHRRIH), and 824 to 846 (YSCPDCGKSYRSFSNLWKHRKTH). R834 is modified (asymmetric dimethylarginine).

This sequence belongs to the krueppel C2H2-type zinc-finger protein family.

The protein localises to the nucleus. May be involved in transcriptional regulation. This is Zinc finger protein 574 (Znf574) from Rattus norvegicus (Rat).